The following is a 290-amino-acid chain: ATP synthase gamma chain (290 aa).

Belongs to the ATPase gamma chain family. F-type ATPases have 2 components, CF(1) - the catalytic core - and CF(0) - the membrane proton channel. CF(1) has five subunits: alpha(3), beta(3), gamma(1), delta(1), epsilon(1). CF(0) has three main subunits: a, b and c.

It localises to the cell membrane. Its function is as follows. Produces ATP from ADP in the presence of a proton gradient across the membrane. The gamma chain is believed to be important in regulating ATPase activity and the flow of protons through the CF(0) complex. This Rubrobacter xylanophilus (strain DSM 9941 / JCM 11954 / NBRC 16129 / PRD-1) protein is ATP synthase gamma chain.